A 516-amino-acid polypeptide reads, in one-letter code: L-amino-acid oxidase (516 aa).

A signal peptide spans 1–18 (MNVFFMFSLLFLAALGSC). A disulfide bridge links C28 with C189. FAD-binding positions include 61–62 (MS), 81–82 (EA), R89, and 103–106 (GPMR). Positions 106 and 239 each coordinate substrate. V279 is a binding site for FAD. A disulfide bond links C349 and C430. A glycan (N-linked (GlcNAc...) asparagine) is linked at N379. Residue Y390 coordinates substrate. FAD-binding positions include E475 and 482–487 (GWIDST). Residue 482–483 (GW) coordinates substrate.

This sequence belongs to the flavin monoamine oxidase family. FIG1 subfamily. Homodimer; non-covalently linked. Requires FAD as cofactor. In terms of processing, N-glycosylated. In terms of tissue distribution, expressed by the venom gland.

The protein resides in the secreted. It carries out the reaction an L-alpha-amino acid + O2 + H2O = a 2-oxocarboxylate + H2O2 + NH4(+). In terms of biological role, catalyzes an oxidative deamination of predominantly hydrophobic and aromatic L-amino acids, thus producing hydrogen peroxide that may contribute to the diverse toxic effects of this enzyme. Exhibits diverse biological activities, such as hemorrhage, hemolysis, edema, apoptosis of vascular endothelial cells or tumor cell lines, antibacterial and antiparasitic activities, as well as regulation of platelet aggregation. Effects of snake L-amino oxidases on platelets are controversial, since they either induce aggregation or inhibit agonist-induced aggregation. These different effects are probably due to different experimental conditions. This is L-amino-acid oxidase from Sistrurus catenatus edwardsii (Desert massasauga).